Consider the following 433-residue polypeptide: Apolipoprotein L5 (433 aa).

The disordered stretch occupies residues 346–433 (HHRHLPQKAS…GRQAPGRHRQ (88 aa)). Residues 359–371 (SSSRGRAVRGSRV) show a composition bias toward low complexity. Residues 422–433 (RKGRQAPGRHRQ) show a composition bias toward basic residues.

This sequence belongs to the apolipoprotein L family. Low level of expression; detected in uterus, testis, skeletal muscle and stomach.

Its subcellular location is the cytoplasm. In terms of biological role, may affect the movement of lipids in the cytoplasm or allow the binding of lipids to organelles. The protein is Apolipoprotein L5 (APOL5) of Homo sapiens (Human).